A 116-amino-acid polypeptide reads, in one-letter code: U3-theraphotoxin-Lsp1a (116 aa).

The first 17 residues, 1–17 (MKLSTFIIMISLAVALA), serve as a signal peptide directing secretion. Residues 18–50 (TWPSEHIEGSDSETKLNVELGPYALADRAEKGK) constitute a propeptide that is removed on maturation.

The protein belongs to the neurotoxin 25 family. F7 subfamily. Post-translationally, contains 3 disulfide bonds. Expressed by the venom gland.

The protein localises to the secreted. The sequence is that of U3-theraphotoxin-Lsp1a from Lasiodora sp. (strain IBSP 8539) (Brazilian salmon pink birdeater).